Reading from the N-terminus, the 418-residue chain is MPKRYLFTSESVTEGHPDKVCDQISDTILDALLSQDPASRVAAEVVVNTGLVLLTGEITTKAQVNFVDLVRQKITEIGYTDSDNGFAANSCSVLVALDEQSPDIAQGVDSAQETREEKSDQELDAIGAGDQGLMFGFACNETPELMPLPISLAHRVTRRLAAVRKTQLGYLRPDGKSQVTVTYEDGRPVGIDTILVSTQHDATIGDITDPAAVQAKIKEDLWNAVVLPVFADIDIKPDDNTRFLVNPTGQFVVGGPQGDAGLTGRKIIVDTYGGYSRHGGGAFSGKDPTKVDRSAAYACRYVAKNIVAAGLAEKCEVQLSYAIGVARPVSILIETFGTGKVDEDRLLQVVQENFELRPAGLIQTFGLTKLPGERGGRFYQDVAAYGHFGRTDLDLPWEATDKADLLKQALSPALSGNA.

Histidine 16 is a binding site for ATP. Position 18 (aspartate 18) interacts with Mg(2+). Glutamate 44 provides a ligand contact to K(+). The L-methionine site is built by glutamate 57 and glutamine 100. The interval 100-110 (QSPDIAQGVDS) is flexible loop. Residues 174 to 176 (DGK), aspartate 259, 265 to 266 (RK), alanine 282, and lysine 286 each bind ATP. Aspartate 259 contacts L-methionine. Lysine 290 serves as a coordination point for L-methionine.

Belongs to the AdoMet synthase family. In terms of assembly, homotetramer; dimer of dimers. Mg(2+) is required as a cofactor. It depends on K(+) as a cofactor.

Its subcellular location is the cytoplasm. The catalysed reaction is L-methionine + ATP + H2O = S-adenosyl-L-methionine + phosphate + diphosphate. It participates in amino-acid biosynthesis; S-adenosyl-L-methionine biosynthesis; S-adenosyl-L-methionine from L-methionine: step 1/1. Its function is as follows. Catalyzes the formation of S-adenosylmethionine (AdoMet) from methionine and ATP. The overall synthetic reaction is composed of two sequential steps, AdoMet formation and the subsequent tripolyphosphate hydrolysis which occurs prior to release of AdoMet from the enzyme. This Acaryochloris marina (strain MBIC 11017) protein is S-adenosylmethionine synthase.